A 603-amino-acid chain; its full sequence is HAUS augmin-like complex subunit 3 (603 aa).

Residue Ser-2 is modified to N-acetylserine. Coiled-coil stretches lie at residues Arg-93–Met-177, Val-305–Leu-336, Leu-389–Leu-426, and Glu-458–Glu-495.

Belongs to the HAUS3 family. In terms of assembly, component of the HAUS augmin-like complex. The complex interacts with the gamma-tubulin ring complex and this interaction is required for spindle assembly. Interacts with EML3 (phosphorylated at 'Thr-881').

It is found in the cytoplasm. The protein resides in the cytoskeleton. The protein localises to the microtubule organizing center. Its subcellular location is the centrosome. It localises to the spindle. Its function is as follows. Contributes to mitotic spindle assembly, maintenance of centrosome integrity and completion of cytokinesis as part of the HAUS augmin-like complex. This is HAUS augmin-like complex subunit 3 (HAUS3) from Homo sapiens (Human).